The following is a 387-amino-acid chain: Mitogen-activated protein kinase homolog MMK1 (387 aa).

The region spanning Lys-55–Leu-340 is the Protein kinase domain. ATP-binding positions include Ile-61 to Val-69 and Lys-84. Residue Asp-181 is the Proton acceptor of the active site. Residue Thr-213 is modified to Phosphothreonine. Positions Thr-213–Tyr-215 match the TXY motif. Residue Tyr-215 is modified to Phosphotyrosine.

It belongs to the protein kinase superfamily. CMGC Ser/Thr protein kinase family. MAP kinase subfamily. Mg(2+) is required as a cofactor. Post-translationally, dually phosphorylated on Thr-213 and Tyr-215, which activates the enzyme. Autophosphorylated. Roots and stems.

The enzyme catalyses L-seryl-[protein] + ATP = O-phospho-L-seryl-[protein] + ADP + H(+). It carries out the reaction L-threonyl-[protein] + ATP = O-phospho-L-threonyl-[protein] + ADP + H(+). Its activity is regulated as follows. Activated by tyrosine and threonine phosphorylation. Functionally, may play a role in the mitogenic induction of symbiotic root nodules on Alfalfa by Rhizobium signal molecules. This Medicago sativa (Alfalfa) protein is Mitogen-activated protein kinase homolog MMK1 (MMK1).